The chain runs to 308 residues: 1D-myo-inositol 2-acetamido-2-deoxy-alpha-D-glucopyranoside deacetylase (308 aa).

Zn(2+) is bound by residues His37, Asp40, and His171.

The protein belongs to the MshB deacetylase family. Requires Zn(2+) as cofactor.

The enzyme catalyses 1D-myo-inositol 2-acetamido-2-deoxy-alpha-D-glucopyranoside + H2O = 1D-myo-inositol 2-amino-2-deoxy-alpha-D-glucopyranoside + acetate. Functionally, catalyzes the deacetylation of 1D-myo-inositol 2-acetamido-2-deoxy-alpha-D-glucopyranoside (GlcNAc-Ins) in the mycothiol biosynthesis pathway. The protein is 1D-myo-inositol 2-acetamido-2-deoxy-alpha-D-glucopyranoside deacetylase of Mycobacterium sp. (strain JLS).